A 324-amino-acid polypeptide reads, in one-letter code: MAKEIKKIAVLTSGGDAPGMNAAIRGVVRAALNEGLEIFGVQDGYYGLYHDKVIPLDRRSVSEIINRGGTFLGSARFPQFKDIEVRKQAVKILAKYEIDALVVIGGDGSYMGAKLLTEEFGYPCIGLPGTIDNDIVGTDYTIGYQTALQTAVEAIDRLRDTSTSHQRISIVEIMGRHCGDLTISAALAGGCEYIIVPEKGLDKESLIHSIADNFRKGKRHAIIAITELMTDVHQLARELEEKFGHETRATVLGHIQRGGSPCPFDRILASRMGVYAVDLLRQGFGGRCVGIQNEHLVHHDIIDAINNMRRPFKQDIFEAASKLA.

An ATP-binding site is contributed by G15. 25-29 lines the ADP pocket; sequence RGVVR. Residues 76-77 and 106-109 contribute to the ATP site; these read RF and GDGS. D107 is a binding site for Mg(2+). 130–132 is a binding site for substrate; sequence TID. D132 acts as the Proton acceptor in catalysis. Residue R159 coordinates ADP. Substrate-binding positions include R167 and 174–176; that span reads MGR. ADP-binding positions include 190–192, K216, and 218–220; these read GCE and KRH. Residues E227, R248, and 254–257 contribute to the substrate site; that span reads HIQR.

Belongs to the phosphofructokinase type A (PFKA) family. ATP-dependent PFK group I subfamily. Prokaryotic clade 'B1' sub-subfamily. Homotetramer. Requires Mg(2+) as cofactor.

It localises to the cytoplasm. It carries out the reaction beta-D-fructose 6-phosphate + ATP = beta-D-fructose 1,6-bisphosphate + ADP + H(+). The protein operates within carbohydrate degradation; glycolysis; D-glyceraldehyde 3-phosphate and glycerone phosphate from D-glucose: step 3/4. Allosterically activated by ADP and other diphosphonucleosides, and allosterically inhibited by phosphoenolpyruvate. Its function is as follows. Catalyzes the phosphorylation of D-fructose 6-phosphate to fructose 1,6-bisphosphate by ATP, the first committing step of glycolysis. This is ATP-dependent 6-phosphofructokinase from Haemophilus ducreyi (strain 35000HP / ATCC 700724).